Consider the following 355-residue polypeptide: Probable nitronate monooxygenase (355 aa).

Residues asparagine 71, glutamine 175, glycine 180, glycine 218, and 237–240 contribute to the FMN site; that span reads QMGT.

It belongs to the nitronate monooxygenase family. NMO class I subfamily. It depends on FMN as a cofactor.

The catalysed reaction is 3 propionate 3-nitronate + 3 O2 + H2O = 3 3-oxopropanoate + 2 nitrate + nitrite + H2O2 + 3 H(+). Nitronate monooxygenase that uses molecular oxygen to catalyze the oxidative denitrification of alkyl nitronates. Acts on propionate 3-nitronate (P3N), the presumed physiological substrate. Probably functions in the detoxification of P3N, a metabolic poison produced by plants and fungi as a defense mechanism. The chain is Probable nitronate monooxygenase from Staphylococcus aureus (strain USA300).